The chain runs to 240 residues: Pyridoxine 5'-phosphate synthase (240 aa).

Asn7 serves as a coordination point for 3-amino-2-oxopropyl phosphate. 9–10 serves as a coordination point for 1-deoxy-D-xylulose 5-phosphate; sequence DH. Position 18 (Arg18) interacts with 3-amino-2-oxopropyl phosphate. His43 acts as the Proton acceptor in catalysis. Residues Arg45 and His50 each contribute to the 1-deoxy-D-xylulose 5-phosphate site. Glu70 acts as the Proton acceptor in catalysis. Thr100 is a binding site for 1-deoxy-D-xylulose 5-phosphate. His191 acts as the Proton donor in catalysis. 3-amino-2-oxopropyl phosphate is bound by residues Gly192 and 213–214; that span reads GH.

The protein belongs to the PNP synthase family. Homooctamer; tetramer of dimers.

Its subcellular location is the cytoplasm. The catalysed reaction is 3-amino-2-oxopropyl phosphate + 1-deoxy-D-xylulose 5-phosphate = pyridoxine 5'-phosphate + phosphate + 2 H2O + H(+). Its pathway is cofactor biosynthesis; pyridoxine 5'-phosphate biosynthesis; pyridoxine 5'-phosphate from D-erythrose 4-phosphate: step 5/5. Functionally, catalyzes the complicated ring closure reaction between the two acyclic compounds 1-deoxy-D-xylulose-5-phosphate (DXP) and 3-amino-2-oxopropyl phosphate (1-amino-acetone-3-phosphate or AAP) to form pyridoxine 5'-phosphate (PNP) and inorganic phosphate. The protein is Pyridoxine 5'-phosphate synthase of Cyanothece sp. (strain PCC 7425 / ATCC 29141).